Consider the following 199-residue polypeptide: Inner membrane-spanning protein YciB (199 aa).

6 helical membrane passes run 4 to 24 (FIDFIPLILFFIVYKLEPRIV), 36 to 56 (IFSATAVLILASLLVYGTLFL), 64 to 84 (GQWITLLACLVFGGMTLTFQS), 90 to 110 (WKAPVVNWLFALGFAASHFIG), 135 to 155 (LAWVAFFVFSGCANLFVAFTF), and 162 to 182 (FKVFGSLGMTVLFLVGQGVFL).

The protein belongs to the YciB family.

The protein localises to the cell inner membrane. Functionally, plays a role in cell envelope biogenesis, maintenance of cell envelope integrity and membrane homeostasis. This chain is Inner membrane-spanning protein YciB, found in Azotobacter vinelandii (strain DJ / ATCC BAA-1303).